The primary structure comprises 1163 residues: Integrin alpha-X (1163 aa).

An N-terminal signal peptide occupies residues 1–19 (MTRTRAALLLFTALATSLG). The Extracellular portion of the chain corresponds to 20 to 1107 (FNLDTEELTA…EKYKVHNPTP (1088 aa)). 2 FG-GAP repeats span residues 23–78 (DTEE…ACEP) and 79–138 (IGLQ…TQRL). Asparagine 61 is a glycosylation site (N-linked (GlcNAc...) asparagine). Cysteine 69 and cysteine 76 are oxidised to a cystine. Residue asparagine 89 is glycosylated (N-linked (GlcNAc...) asparagine). 2 cysteine pairs are disulfide-bonded: cysteine 108-cysteine 126 and cysteine 116-cysteine 145. Mg(2+)-binding residues include aspartate 157, serine 159, serine 161, and aspartate 259. The region spanning 165–339 (RNFATMMNFV…KEKIFAIEGT (175 aa)) is the VWFA domain. 5 FG-GAP repeats span residues 340–391 (ETTS…PTFI), 392–443 (NMSQ…SRQW), 444–504 (RMKA…WRRW), 507–565 (DAVL…PSIS), and 570–630 (QRIA…FIPA). A glycan (N-linked (GlcNAc...) asparagine) is linked at asparagine 392. Aspartate 466, aspartate 468, aspartate 470, and aspartate 474 together coordinate Ca(2+). The cysteines at positions 495 and 506 are disulfide-linked. Ca(2+)-binding residues include aspartate 530, asparagine 532, aspartate 534, aspartate 538, aspartate 593, aspartate 597, and aspartate 601. 2 disulfide bridges follow: cysteine 639-cysteine 722 and cysteine 655-cysteine 712. N-linked (GlcNAc...) asparagine glycans are attached at residues asparagine 697 and asparagine 735. 2 disulfide bridges follow: cysteine 771/cysteine 777 and cysteine 848/cysteine 863. Asparagine 899 and asparagine 939 each carry an N-linked (GlcNAc...) asparagine glycan. 2 cysteine pairs are disulfide-bonded: cysteine 998–cysteine 1022 and cysteine 1027–cysteine 1032. N-linked (GlcNAc...) asparagine glycosylation is present at asparagine 1050. The helical transmembrane segment at 1108 to 1128 (LIVGSSIGGLLLLALITAVLY) threads the bilayer. Residues 1129–1163 (KVGFFKRQYKEMMEEANGQIAPENGTQTPSPPSEK) lie on the Cytoplasmic side of the membrane. The GFFKR motif signature appears at 1131-1135 (GFFKR).

It belongs to the integrin alpha chain family. Heterodimer of an alpha and a beta subunit. Alpha-X associates with beta-2. As to expression, predominantly expressed in monocytes and granulocytes.

Its subcellular location is the membrane. In terms of biological role, integrin alpha-X/beta-2 is a receptor for fibrinogen. It recognizes the sequence G-P-R in fibrinogen. It mediates cell-cell interaction during inflammatory responses. It is especially important in monocyte adhesion and chemotaxis. The protein is Integrin alpha-X (ITGAX) of Homo sapiens (Human).